The following is a 138-amino-acid chain: Transposon Tn10 TetD protein (138 aa).

The HTH araC/xylS-type domain occupies 31-129; that stretch reads KDVLLWIEHN…KVTPSYYRRN (99 aa). 2 consecutive DNA-binding regions (H-T-H motif) follow at residues 48 to 69 and 96 to 119; these read DDVA…KKVT and ILEI…KYIF.

This chain is Transposon Tn10 TetD protein (tetD), found in Escherichia coli.